We begin with the raw amino-acid sequence, 296 residues long: MDYFNIKQNYYTGNFVQCLQEIEKFSKVTDNTLLFYKAKTLLALGQYQSQDPTSKLGKVLDLYVQFLDTKNIEELENLLKDKQNSPYELYLLATAQAILGDLDKSLETCVEGIDNDEAEGTTELLLLAIEVALLNNNVSTASTIFDNYTNAIEDTVSGDNEMILNLAESYIKFATNKETATSNFYYYEELSQTFPTWKTQLGLLNLHLQQRNIAEAQGIVELLLSDYYSVEQKENAVLYKPTFLANQITLALMQGLDTEDLTNQLVKLDHEHAFIKHHQEIDAKFDELVRKYDTSN.

It belongs to the COPE family. As to quaternary structure, oligomeric complex that consists of at least the alpha, beta, beta', gamma, delta, epsilon and zeta subunits. Interacts with the ESCRT-0 subunit VPS27.

It localises to the cytoplasm. The protein localises to the golgi apparatus membrane. It is found in the cytoplasmic vesicle. Its subcellular location is the COPI-coated vesicle membrane. In terms of biological role, the coatomer is a cytosolic protein complex that binds to dilysine motifs and reversibly associates with Golgi non-clathrin-coated vesicles, which further mediate biosynthetic protein transport from the ER, via the Golgi up to the trans Golgi network. The coatomer complex is required for budding from Golgi membranes, and is essential for the retrograde Golgi-to-ER transport of dilysine-tagged proteins. This Saccharomyces cerevisiae (strain ATCC 204508 / S288c) (Baker's yeast) protein is Coatomer subunit epsilon (SEC28).